Reading from the N-terminus, the 83-residue chain is Alpha-toxin CvIV4 (83 aa).

A signal peptide spans 1–19; it reads MNYFILILVAALLILDVNC. One can recognise an LCN-type CS-alpha/beta domain in the interval 21–79; sequence KDGYPVEHSGCKYTCWKNEYCDKVCKDLKGEGGYCYINLTCWCTGLPDNVPLKTNQRCN. 4 cysteine pairs are disulfide-bonded: C31/C78, C35/C55, C41/C61, and C45/C63.

It belongs to the long (4 C-C) scorpion toxin superfamily. Sodium channel inhibitor family. As to expression, expressed by the venom gland.

It is found in the secreted. In terms of biological role, this toxin significantly slows the fast inactivation of Nav1.2/SCN2A (EC(50)=580 nM), Nav1.3/SCN3A (EC(50)=1310 nM), Nav1.4/SCN4A (EC(50)=530 nM), and Nav1.7/SCN9A (EC(50)=1340 nM). The toxin does not affect the peak amplitude of Nav1.7 currents. On all channels cited above, the toxin requires depolarizing potentials to slow channel inactivation. In addition, the toxin has no or very weak effects on the voltage-dependence of steady-state inactivation, and on voltage-dependence of activation. In vivo, it produces paw licking in mice equivalent to the effects of whole venom. This Centruroides vittatus (Striped bark scorpion) protein is Alpha-toxin CvIV4.